The chain runs to 441 residues: Protein kinase C and casein kinase substrate in neurons protein 1 (441 aa).

A phosphoserine mark is found at serine 2 and serine 76. Residues 10-280 (EEITDSFWEV…AIRGADAQED (271 aa)) form the F-BAR domain. The stretch at 23–272 (KRTVKRIDDG…HVYRELEQAI (250 aa)) forms a coiled coil. The residue at position 181 (threonine 181) is a Phosphothreonine. The tract at residues 297–380 (PQFEEWNPDL…ANGGANPFED (84 aa)) is disordered. The span at 311–321 (AKKEKQPKKAE) shows a compositional bias: basic and acidic residues. Over residues 324–355 (TLSNATGAVESTSQAGDRGSVSSYDRGQTYAT) the composition is skewed to polar residues. 5 positions are modified to phosphoserine: serine 343, serine 345, serine 346, serine 358, and serine 362. Positions 382–441 (AKGVRVRALYDYDGQEQDELSFKAGDELTKLGEEDEQGWCRGRLDSGQLGLYPANYVEAI) constitute an SH3 domain. Tyrosine 391 is modified (phosphotyrosine). A phosphoserine mark is found at serine 402 and serine 427.

This sequence belongs to the PACSIN family. In terms of assembly, homodimer. May form heterooligomers with other PACSINs. Interacts with both COBL and DBNL. Identified in a complex composed of COBL, PACSIN1 and WASL. Interacts with EHD3. Interacts (via SH3 domain) with SYNJ1 and WASL. Interacts (via SH3 domain) with DNM1; the interaction is reduced by DNM1 phosphorylation. Interacts with DNM2 and DNM3. Interacts with MAPT. Interacts with EHD1. Interacts with TRPV4. In terms of processing, phosphorylated by casein kinase 2 (CK2) and protein kinase C (PKC). In terms of tissue distribution, highly expressed in brain. Detected in hippocampus and dorsal root ganglion neurons. Detected in rod photoreceptor terminals in the outer plexiform layer of the retina (at protein level). In CNS neurons, high levels in the pyramidal cells of the hippocampus, Purkinje cells of the cerebellum and large neurons of the cortex and brain stem.

It localises to the cytoplasm. Its subcellular location is the cell projection. The protein localises to the synapse. The protein resides in the synaptosome. It is found in the ruffle membrane. It localises to the membrane. Its subcellular location is the cytoplasmic vesicle membrane. The protein localises to the cytosol. The protein resides in the cell membrane. Binds to membranes via its F-BAR domain and mediates membrane tubulation. Plays a role in the reorganization of the microtubule cytoskeleton via its interaction with MAPT; this decreases microtubule stability and inhibits MAPT-induced microtubule polymerization. Plays a role in cellular transport processes by recruiting DNM1, DNM2 and DNM3 to membranes. Plays a role in the reorganization of the actin cytoskeleton and in neuron morphogenesis via its interaction with COBL and WASL, and by recruiting COBL to the cell cortex. Plays a role in the regulation of neurite formation, neurite branching and the regulation of neurite length. Required for normal synaptic vesicle endocytosis; this process retrieves previously released neurotransmitters to accommodate multiple cycles of neurotransmission. Required for normal excitatory and inhibitory synaptic transmission. The sequence is that of Protein kinase C and casein kinase substrate in neurons protein 1 (Pacsin1) from Mus musculus (Mouse).